A 198-amino-acid polypeptide reads, in one-letter code: HTH-type transcriptional regulator BetI (198 aa).

The 61-residue stretch at 8 to 68 folds into the HTH tetR-type domain; it reads PIRRQQLIEA…ATMRYLIRHL (61 aa). The segment at residues 31 to 50 is a DNA-binding region (H-T-H motif); the sequence is SIAQIAKRAGVSNGIISHYF.

Its pathway is amine and polyamine biosynthesis; betaine biosynthesis via choline pathway [regulation]. Functionally, repressor involved in the biosynthesis of the osmoprotectant glycine betaine. It represses transcription of the choline transporter BetT and the genes of BetAB involved in the synthesis of glycine betaine. This chain is HTH-type transcriptional regulator BetI, found in Yersinia pseudotuberculosis serotype O:1b (strain IP 31758).